The chain runs to 209 residues: Adenylate kinase (209 aa).

59–64 (GSGKRT) serves as a coordination point for ATP. An NMP region spans residues 79 to 108 (SSGQVLTRGVESGSETSQLAHSYVSRGERV). AMP-binding positions include Ser80, 106–108 (ERV), 135–138 (GYPR), and Gln142. The segment at 172–205 (HRRYDPATNKXYHMLDNPPPGGRCRVMRTAPAEG) is LID. ATP is bound at residue Arg173.

This sequence belongs to the adenylate kinase family. As to quaternary structure, monomer.

The protein localises to the cytoplasm. The enzyme catalyses AMP + ATP = 2 ADP. Functionally, catalyzes the reversible transfer of the terminal phosphate group between ATP and AMP. Plays an important role in cellular energy homeostasis and in adenine nucleotide metabolism. This chain is Adenylate kinase, found in Trypanosoma brucei rhodesiense.